A 336-amino-acid chain; its full sequence is P2Y purinoceptor 13 (336 aa).

The Extracellular portion of the chain corresponds to 1 to 32 (MLGTVNTTGMQGFNKSERCPRDTRMTQLLFPV). Residues N6 and N14 are each glycosylated (N-linked (GlcNAc...) asparagine). The helical transmembrane segment at 33–53 (LYTVVFFTGVLLNTLALWVFI) threads the bilayer. The Cytoplasmic segment spans residues 54-60 (HIPSNST). The chain crosses the membrane as a helical span at residues 61–81 (FIIYLKNTLVADLIMTLMLPF). At 82-100 (KILSDSRLAPWQLRGFVCT) the chain is on the extracellular side. An intrachain disulfide couples C99 to C176. The chain crosses the membrane as a helical span at residues 101–121 (FSSVVFYETMYVGIMMLGLIA). Residues 122–144 (FDRFLKIVVPFRKTFVKKTAFAK) lie on the Cytoplasmic side of the membrane. The helical transmembrane segment at 145–165 (IVSISIWLLMFLISLPNMILN) threads the bilayer. The Extracellular segment spans residues 166–193 (KEATASTVKKCASLKSPLGLLWHQVVSH). The chain crosses the membrane as a helical span at residues 194–214 (TCQFIFWTVFILMLLFYTVIA). Residues 215–237 (KKVYDSYRKFKSRDSKHKRLEAK) are Cytoplasmic-facing. Residues 238–258 (VFIVMAVFFVCFAPFHFVRVP) traverse the membrane as a helical segment. Over 259-281 (YTHSQTTNKTDCRLENQLFLAKE) the chain is Extracellular. N266 carries an N-linked (GlcNAc...) asparagine glycan. The chain crosses the membrane as a helical span at residues 282-302 (STLFLATTNICMDPLIYIILC). Over 303–336 (KKFTRKVPCMRWRTKTAASSDEHHSSQTDNITLS) the chain is Cytoplasmic.

It belongs to the G-protein coupled receptor 1 family. In terms of tissue distribution, highest levels in spleen, liver brain and kidney. Lower but significant level are also detected in intestine, stomach, skeletal muscle, testis, heart and lung.

It is found in the cell membrane. In terms of biological role, receptor for ADP. Coupled to G(i)-proteins. May play a role in hematopoiesis and the immune system. In Rattus norvegicus (Rat), this protein is P2Y purinoceptor 13 (P2ry13).